We begin with the raw amino-acid sequence, 459 residues long: Methylenetetrahydrofolate--tRNA-(uracil-5-)-methyltransferase TrmFO (459 aa).

11-16 (GAGLAG) lines the FAD pocket.

Belongs to the MnmG family. TrmFO subfamily. FAD serves as cofactor.

It is found in the cytoplasm. It carries out the reaction uridine(54) in tRNA + (6R)-5,10-methylene-5,6,7,8-tetrahydrofolate + NADH + H(+) = 5-methyluridine(54) in tRNA + (6S)-5,6,7,8-tetrahydrofolate + NAD(+). It catalyses the reaction uridine(54) in tRNA + (6R)-5,10-methylene-5,6,7,8-tetrahydrofolate + NADPH + H(+) = 5-methyluridine(54) in tRNA + (6S)-5,6,7,8-tetrahydrofolate + NADP(+). In terms of biological role, catalyzes the folate-dependent formation of 5-methyl-uridine at position 54 (M-5-U54) in all tRNAs. The sequence is that of Methylenetetrahydrofolate--tRNA-(uracil-5-)-methyltransferase TrmFO from Synechococcus sp. (strain CC9311).